A 388-amino-acid chain; its full sequence is Lamin tail domain-containing protein 1 (388 aa).

Residues 136–254 (EVGQFTSSSL…QAIAWYTPIH (119 aa)) enclose the LTD domain. Positions 349 to 388 (EPHNTSTAGGRLDRQPRTRSTRPNRASGSKKKKTSESQKQ) are disordered. The span at 365-381 (RTRSTRPNRASGSKKKK) shows a compositional bias: basic residues.

The protein belongs to the intermediate filament family.

The chain is Lamin tail domain-containing protein 1 (LMNTD1) from Homo sapiens (Human).